The primary structure comprises 480 residues: 2-phosphoxylose phosphatase 1 (480 aa).

Residues 1-6 (MLFRNR) lie on the Cytoplasmic side of the membrane. The helical; Signal-anchor for type II membrane protein transmembrane segment at 7 to 27 (FLLLLALAALLAFVSLSLQFF) threads the bilayer. Topologically, residues 28–480 (HLIPVSTPKN…YYDACHREGF (453 aa)) are lumenal. The active-site Nucleophile is the histidine 97. N-linked (GlcNAc...) asparagine glycosylation is found at asparagine 305 and asparagine 354. The active-site Proton donor is aspartate 379.

Belongs to the histidine acid phosphatase family. As to quaternary structure, interacts with B3GAT3; the interaction increases the 2-phosphoxylose phosphatase activity of PXYLP1 during completion of linkage region formation in a B3GAT3-mediated manner. Widely expressed. Strongly expressed in spleen, fetal liver, moderately in placenta, pancreas, kidney, thymus and colon.

Its subcellular location is the golgi apparatus membrane. It catalyses the reaction 3-O-[beta-D-GlcA-(1-&gt;3)-beta-D-Gal-(1-&gt;3)-beta-D-Gal-(1-&gt;4)-beta-D-2-O-P-Xyl]-L-seryl-[protein] + H2O = 3-O-(beta-D-GlcA-(1-&gt;3)-beta-D-Gal-(1-&gt;3)-beta-D-Gal-(1-&gt;4)-beta-D-Xyl)-L-seryl-[protein] + phosphate. Responsible for the 2-O-dephosphorylation of xylose in the glycosaminoglycan-protein linkage region of proteoglycans thereby regulating the amount of mature glycosaminoglycan (GAG) chains. Sulfated glycosaminoglycans (GAGs), including heparan sulfate and chondroitin sulfate, are synthesized on the so-called common GAG-protein linkage region (GlcUAbeta1-3Galbeta1-3Galbeta1-4Xylbeta1-O-Ser) of core proteins, which is formed by the stepwise addition of monosaccharide residues by the respective specific glycosyltransferases. Xylose 2-O-dephosphorylation during completion of linkage region formation is a prerequisite for the initiation and efficient elongation of the repeating disaccharide region of GAG chains. This is 2-phosphoxylose phosphatase 1 from Homo sapiens (Human).